A 287-amino-acid polypeptide reads, in one-letter code: Neuferricin homolog (287 aa).

An N-terminal signal peptide occupies residues 1–22; sequence MFGLLRHLFKFQFLFVVAAVLG. The Cytochrome b5 heme-binding domain maps to 61–146; it reads GTLFTPAELA…KPDDLIGLAG (86 aa). Positions 175–204 form a coiled coil; sequence YHHKFLELLEQARDAKRQVEELRARYPGCN.

The protein belongs to the cytochrome b5 family. MAPR subfamily.

The protein resides in the secreted. Heme-binding protein. This is Neuferricin homolog from Drosophila melanogaster (Fruit fly).